An 87-amino-acid chain; its full sequence is MAHKKGTGSTRNGRDSNSKRLGVKAYGGEKVTAGSILIRQRGTSVLPGANVGQGKDDTLFALVDGIVNFETIKRSLKKRKRISVSLA.

The segment at M1–Y26 is disordered.

Belongs to the bacterial ribosomal protein bL27 family.

The protein is Large ribosomal subunit protein bL27 of Prochlorococcus marinus (strain SARG / CCMP1375 / SS120).